The following is a 442-amino-acid chain: D-inositol 3-phosphate glycosyltransferase (442 aa).

A 1D-myo-inositol 3-phosphate-binding site is contributed by His26. UDP-N-acetyl-alpha-D-glucosamine contacts are provided by residues 32-33 (QP) and Gly40. 1D-myo-inositol 3-phosphate contacts are provided by residues 37 to 42 (DAGGMN), Lys95, Tyr128, Thr152, and Arg172. The UDP-N-acetyl-alpha-D-glucosamine site is built by Arg246, Lys251, and Gln304. Mg(2+)-binding residues include Tyr313, Arg314, and Ala316. The UDP-N-acetyl-alpha-D-glucosamine site is built by Glu326 and Glu334. Thr340 contributes to the Mg(2+) binding site.

Belongs to the glycosyltransferase group 1 family. MshA subfamily. Homodimer.

The catalysed reaction is 1D-myo-inositol 3-phosphate + UDP-N-acetyl-alpha-D-glucosamine = 1D-myo-inositol 2-acetamido-2-deoxy-alpha-D-glucopyranoside 3-phosphate + UDP + H(+). Functionally, catalyzes the transfer of a N-acetyl-glucosamine moiety to 1D-myo-inositol 3-phosphate to produce 1D-myo-inositol 2-acetamido-2-deoxy-glucopyranoside 3-phosphate in the mycothiol biosynthesis pathway. This is D-inositol 3-phosphate glycosyltransferase from Mycolicibacterium gilvum (strain PYR-GCK) (Mycobacterium gilvum (strain PYR-GCK)).